We begin with the raw amino-acid sequence, 313 residues long: Ribosomal RNA small subunit methyltransferase H (313 aa).

Residues 31-33 (GGH), Asp51, Phe77, Asp95, and Gln102 each bind S-adenosyl-L-methionine.

This sequence belongs to the methyltransferase superfamily. RsmH family.

Its subcellular location is the cytoplasm. The catalysed reaction is cytidine(1402) in 16S rRNA + S-adenosyl-L-methionine = N(4)-methylcytidine(1402) in 16S rRNA + S-adenosyl-L-homocysteine + H(+). In terms of biological role, specifically methylates the N4 position of cytidine in position 1402 (C1402) of 16S rRNA. This is Ribosomal RNA small subunit methyltransferase H from Xylella fastidiosa (strain M12).